The chain runs to 283 residues: 2-dehydro-3-deoxyphosphooctonate aldolase (283 aa).

This sequence belongs to the KdsA family.

It localises to the cytoplasm. The catalysed reaction is D-arabinose 5-phosphate + phosphoenolpyruvate + H2O = 3-deoxy-alpha-D-manno-2-octulosonate-8-phosphate + phosphate. It participates in carbohydrate biosynthesis; 3-deoxy-D-manno-octulosonate biosynthesis; 3-deoxy-D-manno-octulosonate from D-ribulose 5-phosphate: step 2/3. Its pathway is bacterial outer membrane biogenesis; lipopolysaccharide biosynthesis. This chain is 2-dehydro-3-deoxyphosphooctonate aldolase, found in Prochlorococcus marinus (strain MIT 9313).